The following is a 212-amino-acid chain: Large ribosomal subunit protein uL1 (212 aa).

This sequence belongs to the universal ribosomal protein uL1 family. As to quaternary structure, part of the 50S ribosomal subunit.

Binds directly to 23S rRNA. Probably involved in E site tRNA release. Its function is as follows. Protein L1 is also a translational repressor protein, it controls the translation of its operon by binding to its mRNA. The polypeptide is Large ribosomal subunit protein uL1 (Haloquadratum walsbyi (strain DSM 16790 / HBSQ001)).